The sequence spans 623 residues: V-type proton ATPase catalytic subunit A (623 aa).

Residue 252–259 (GAFGCGKT) coordinates ATP.

It belongs to the ATPase alpha/beta chains family. As to quaternary structure, V-ATPase is a heteromultimeric enzyme composed of a peripheral catalytic V1 complex (main components: subunits A, B, C, D, E, and F) attached to an integral membrane V0 proton pore complex (main component: the proteolipid protein).

The enzyme catalyses ATP + H2O + 4 H(+)(in) = ADP + phosphate + 5 H(+)(out). Catalytic subunit of the peripheral V1 complex of vacuolar ATPase. V-ATPase vacuolar ATPase is responsible for acidifying a variety of intracellular compartments in eukaryotic cells. The polypeptide is V-type proton ATPase catalytic subunit A (Vigna radiata var. radiata (Mung bean)).